We begin with the raw amino-acid sequence, 76 residues long: Histone acetyltransferase (76 aa).

As to quaternary structure, physically interacts with histone H3 in infected macrophages.

It localises to the secreted. It is found in the host cytoplasm. The protein resides in the host nucleus. It catalyses the reaction L-lysyl-[protein] + acetyl-CoA = N(6)-acetyl-L-lysyl-[protein] + CoA + H(+). With respect to regulation, is completely inhibited by anacardic acid, an inhibitor of HAT activity. Functionally, histone acetyltransferase, which by binding to the host chromatin, may manipulate the expression of host genes involved in anti-inflammatory responses to evade clearance and to survive in the intracellular milieu. Acetylates histone H3 at the 'Lys-9' and 'Lys-14' positions. This Mycobacterium tuberculosis (strain CDC 1551 / Oshkosh) protein is Histone acetyltransferase.